The sequence spans 540 residues: Peptide chain release factor 3 (540 aa).

Residues 14–283 (ELRRNFAIIS…YFLNYALKPG (270 aa)) form the tr-type G domain. GTP-binding positions include 23–30 (SHPDAGKT), 91–95 (DTPGH), and 145–148 (NKLD).

It belongs to the TRAFAC class translation factor GTPase superfamily. Classic translation factor GTPase family. PrfC subfamily.

It localises to the cytoplasm. Its function is as follows. Increases the formation of ribosomal termination complexes and stimulates activities of RF-1 and RF-2. It binds guanine nucleotides and has strong preference for UGA stop codons. It may interact directly with the ribosome. The stimulation of RF-1 and RF-2 is significantly reduced by GTP and GDP, but not by GMP. This Trichormus variabilis (strain ATCC 29413 / PCC 7937) (Anabaena variabilis) protein is Peptide chain release factor 3.